Here is a 555-residue protein sequence, read N- to C-terminus: Protein peste (555 aa).

At 1–7 (MTSRTRH) the chain is on the cytoplasmic side. Residues 8-28 (CARLGIVLLGICCIASGIYLF) form a helical membrane-spanning segment. The Extracellular portion of the chain corresponds to 29-434 (RNWIDMFTRM…VRVSEEIAAD (406 aa)). Residues Asn70, Asn110, Asn129, Asn213, Asn242, Asn312, and Asn342 are each glycosylated (N-linked (GlcNAc...) asparagine). The helical transmembrane segment at 435–455 (IALVPLIVLLGQIVTGILLAG) threads the bilayer. The Cytoplasmic portion of the chain corresponds to 456–555 (GLICTCWYPT…SEDSPDVVVR (100 aa)).

The protein belongs to the CD36 family.

It localises to the cell membrane. Functionally, (Microbial infection) Plays a role in mycobacterial infection. Mediates infection by M.fortuitum and uptake of M.smegmatis. The sequence is that of Protein peste from Drosophila melanogaster (Fruit fly).